The primary structure comprises 455 residues: Exodeoxyribonuclease 7 large subunit (455 aa).

It belongs to the XseA family. As to quaternary structure, heterooligomer composed of large and small subunits.

It is found in the cytoplasm. The enzyme catalyses Exonucleolytic cleavage in either 5'- to 3'- or 3'- to 5'-direction to yield nucleoside 5'-phosphates.. Its function is as follows. Bidirectionally degrades single-stranded DNA into large acid-insoluble oligonucleotides, which are then degraded further into small acid-soluble oligonucleotides. The sequence is that of Exodeoxyribonuclease 7 large subunit from Escherichia fergusonii (strain ATCC 35469 / DSM 13698 / CCUG 18766 / IAM 14443 / JCM 21226 / LMG 7866 / NBRC 102419 / NCTC 12128 / CDC 0568-73).